Consider the following 418-residue polypeptide: ATP-dependent RNA helicase RhlB (418 aa).

The Q motif signature appears at 9-37; the sequence is TKFADLPLEKSLISGLTSQGYEYCTPIQA. Residues 40 to 219 form the Helicase ATP-binding domain; it reads LPITLTGKDI…FEHMNDPESI (180 aa). 53-60 is a binding site for ATP; the sequence is AQTGTGKT. The DEAD box motif lies at 165–168; that stretch reads DEAD. The 148-residue stretch at 243–390 folds into the Helicase C-terminal domain; the sequence is KILLLLSLIE…CSEYDKNAML (148 aa).

It belongs to the DEAD box helicase family. RhlB subfamily. Component of the RNA degradosome, which is a multiprotein complex involved in RNA processing and mRNA degradation.

Its subcellular location is the cytoplasm. It catalyses the reaction ATP + H2O = ADP + phosphate + H(+). In terms of biological role, DEAD-box RNA helicase involved in RNA degradation. Has RNA-dependent ATPase activity and unwinds double-stranded RNA. The protein is ATP-dependent RNA helicase RhlB of Psychromonas ingrahamii (strain DSM 17664 / CCUG 51855 / 37).